Consider the following 1668-residue polypeptide: DNA polymerase (1668 aa).

2 consecutive DOD-type homing endonuclease domains span residues 739-872 (LLGY…SLGV) and 1191-1330 (LIGL…LVGV).

It belongs to the DNA polymerase type-B family. In terms of processing, this protein undergoes a protein self splicing that involves a post-translational excision of the intervening region (intein) followed by peptide ligation.

The catalysed reaction is DNA(n) + a 2'-deoxyribonucleoside 5'-triphosphate = DNA(n+1) + diphosphate. In addition to polymerase activity, this DNA polymerase exhibits 3' to 5' exonuclease activity. Its function is as follows. PI-ThyI and PI-ThyII are endonucleases. PI-ThyI cleaves the inteinless sequence of the Thy DNA pol gene. It requires a 21-bp minimal recognition sequence. The polypeptide is DNA polymerase (pol) (Thermococcus hydrothermalis).